The sequence spans 341 residues: UDP-3-O-acylglucosamine N-acyltransferase (341 aa).

The Proton acceptor role is filled by His-239.

It belongs to the transferase hexapeptide repeat family. LpxD subfamily. In terms of assembly, homotrimer.

It carries out the reaction a UDP-3-O-[(3R)-3-hydroxyacyl]-alpha-D-glucosamine + a (3R)-hydroxyacyl-[ACP] = a UDP-2-N,3-O-bis[(3R)-3-hydroxyacyl]-alpha-D-glucosamine + holo-[ACP] + H(+). It functions in the pathway bacterial outer membrane biogenesis; LPS lipid A biosynthesis. Catalyzes the N-acylation of UDP-3-O-acylglucosamine using 3-hydroxyacyl-ACP as the acyl donor. Is involved in the biosynthesis of lipid A, a phosphorylated glycolipid that anchors the lipopolysaccharide to the outer membrane of the cell. In Shewanella oneidensis (strain ATCC 700550 / JCM 31522 / CIP 106686 / LMG 19005 / NCIMB 14063 / MR-1), this protein is UDP-3-O-acylglucosamine N-acyltransferase.